The sequence spans 141 residues: 3-hydroxyacyl-[acyl-carrier-protein] dehydratase FabZ (141 aa).

His-49 is an active-site residue.

This sequence belongs to the thioester dehydratase family. FabZ subfamily.

Its subcellular location is the cytoplasm. It catalyses the reaction a (3R)-hydroxyacyl-[ACP] = a (2E)-enoyl-[ACP] + H2O. Involved in unsaturated fatty acids biosynthesis. Catalyzes the dehydration of short chain beta-hydroxyacyl-ACPs and long chain saturated and unsaturated beta-hydroxyacyl-ACPs. The protein is 3-hydroxyacyl-[acyl-carrier-protein] dehydratase FabZ of Clostridium acetobutylicum (strain ATCC 824 / DSM 792 / JCM 1419 / IAM 19013 / LMG 5710 / NBRC 13948 / NRRL B-527 / VKM B-1787 / 2291 / W).